The following is a 248-amino-acid chain: Ribosomal RNA small subunit methyltransferase J (248 aa).

Residues 98 to 99 (RD), 114 to 115 (ER), 150 to 151 (SS), and Asp168 contribute to the S-adenosyl-L-methionine site.

This sequence belongs to the methyltransferase superfamily. RsmJ family.

It localises to the cytoplasm. It carries out the reaction guanosine(1516) in 16S rRNA + S-adenosyl-L-methionine = N(2)-methylguanosine(1516) in 16S rRNA + S-adenosyl-L-homocysteine + H(+). Functionally, specifically methylates the guanosine in position 1516 of 16S rRNA. This chain is Ribosomal RNA small subunit methyltransferase J, found in Shewanella denitrificans (strain OS217 / ATCC BAA-1090 / DSM 15013).